The chain runs to 433 residues: MRQSHQLPLVGLLLFSFIPSQLCEICEVSEENYIRLKPLLNTMIQSNYNRGTSAVNVVLSLKLVGIQIQTLMQKMIQQIKYNVKSRLSDVSSGELALIILALGVCRNAEENLIYDYHLIDKLENKFQAEIENMEAHNGTPLTNYYQLSLDVLALCLFNGNYSTAEVVNHFTPENKNYYFGSQFSVDTGAMAVLALTCVKKSLINGQIKADEGSLKNISIYTKSLVEKILSEKKENGLIGNTFSTGEAMQALFVSSDYYNENDWNCQQTLNTVLTEISQGAFSNPNAAAQVLPALMGKTFLDINKDSSCVSASGNFNISADEPITVTPPDSQSYISVNYSVRINETYFTNVTVLNGSVFLSVMEKAQKMNDTIFGFTMEERSWGPYITCIQGLCANNNDRTYWELLSGGEPLSQGAGSYVVRNGENLEVRWSKY.

Positions 1-23 are cleaved as a signal peptide; sequence MRQSHQLPLVGLLLFSFIPSQLC. The segment at 24–310 is globular N-terminal alpha domain; that stretch reads EICEVSEENY…DINKDSSCVS (287 aa). 3 cysteine pairs are disulfide-bonded: C26–C265, C105–C308, and C155–C197. 142 to 146 provides a ligand contact to cyanocob(III)alamin; that stretch reads TNYYQ. N160 carries an N-linked (GlcNAc...) asparagine glycan. Residue D186 coordinates cyanocob(III)alamin. The N-linked (GlcNAc...) asparagine glycan is linked to N216. Cyanocob(III)alamin-binding residues include N240 and Q289. The flexible linker stretch occupies residues 311–332; the sequence is ASGNFNISADEPITVTPPDSQS. Residues N316, N337, N343, N349, N354, and N369 are each glycosylated (N-linked (GlcNAc...) asparagine). Residues 333–433 are globular C-terminal beta domain; it reads YISVNYSVRI…ENLEVRWSKY (101 aa). Residue 385 to 386 participates in cyanocob(III)alamin binding; it reads YI. A disulfide bridge links C388 with C393. Cyanocob(III)alamin contacts are provided by residues 402-404, L411, and Y433; that span reads WEL.

The protein belongs to the eukaryotic cobalamin transport proteins family. Contains about 30% carbohydrates. Produced by the salivary glands of the oral cavity, in response to ingestion of food. Major constituent of secondary granules in neutrophils.

It is found in the secreted. Its function is as follows. Binds vitamin B12 with femtomolar affinity and protects it from the acidic environment of the stomach. The chain is Transcobalamin-1 (TCN1) from Homo sapiens (Human).